A 315-amino-acid polypeptide reads, in one-letter code: Ribosomal RNA small subunit methyltransferase H (315 aa).

S-adenosyl-L-methionine-binding positions include 33-35, D52, F84, D106, and Q113; that span reads GGH.

It belongs to the methyltransferase superfamily. RsmH family.

It localises to the cytoplasm. The catalysed reaction is cytidine(1402) in 16S rRNA + S-adenosyl-L-methionine = N(4)-methylcytidine(1402) in 16S rRNA + S-adenosyl-L-homocysteine + H(+). Specifically methylates the N4 position of cytidine in position 1402 (C1402) of 16S rRNA. The sequence is that of Ribosomal RNA small subunit methyltransferase H from Lactobacillus acidophilus (strain ATCC 700396 / NCK56 / N2 / NCFM).